We begin with the raw amino-acid sequence, 140 residues long: Small ribosomal subunit protein uS9A (140 aa).

It belongs to the universal ribosomal protein uS9 family. In terms of assembly, component of the small ribosomal subunit (SSU). Mature yeast ribosomes consist of a small (40S) and a large (60S) subunit. The 40S small subunit contains 1 molecule of ribosomal RNA (18S rRNA) and at least 33 different proteins. The large 60S subunit contains 3 rRNA molecules (25S, 5.8S and 5S rRNA) and at least 46 different proteins.

The protein resides in the cytoplasm. Functionally, component of the ribosome, a large ribonucleoprotein complex responsible for the synthesis of proteins in the cell. The small ribosomal subunit (SSU) binds messenger RNAs (mRNAs) and translates the encoded message by selecting cognate aminoacyl-transfer RNA (tRNA) molecules. The large subunit (LSU) contains the ribosomal catalytic site termed the peptidyl transferase center (PTC), which catalyzes the formation of peptide bonds, thereby polymerizing the amino acids delivered by tRNAs into a polypeptide chain. The nascent polypeptides leave the ribosome through a tunnel in the LSU and interact with protein factors that function in enzymatic processing, targeting, and the membrane insertion of nascent chains at the exit of the ribosomal tunnel. The chain is Small ribosomal subunit protein uS9A (rps1601) from Schizosaccharomyces pombe (strain 972 / ATCC 24843) (Fission yeast).